A 303-amino-acid polypeptide reads, in one-letter code: tRNA pseudouridine synthase-like 1 (303 aa).

D66 (nucleophile) is an active-site residue. The residue at position 84 (S84) is a Phosphoserine. Residue Y130 coordinates substrate.

Belongs to the tRNA pseudouridine synthase TruA family.

The catalysed reaction is a uridine in tRNA = a pseudouridine in tRNA. This is tRNA pseudouridine synthase-like 1 (PUSL1) from Homo sapiens (Human).